A 186-amino-acid chain; its full sequence is Bis(5'-nucleosyl)-tetraphosphatase, symmetrical (186 aa).

Residues 18 to 132 (RYIHTVGVMN…IYVADYIEPN (115 aa)) form the HD domain. Residue H21 participates in ADP binding. Positions 21, 50, and 51 each coordinate Fe cation. ADP-binding positions include 51-54 (DYAK), H83, 109-110 (HT), D127, R133, and 170-175 (PVFPDT). D127 provides a ligand contact to Fe cation.

This sequence belongs to the Ap4A hydrolase YqeK family. In terms of assembly, homodimer.

The catalysed reaction is P(1),P(4)-bis(5'-adenosyl) tetraphosphate + H2O = 2 ADP + 2 H(+). Its function is as follows. Hydrolyzes diadenosine 5',5'''-P1,P4-tetraphosphate (Ap4A) to yield ADP. This is Bis(5'-nucleosyl)-tetraphosphatase, symmetrical (yqeK) from Bacillus subtilis (strain 168).